Consider the following 286-residue polypeptide: 4-hydroxybenzoate octaprenyltransferase (286 aa).

8 consecutive transmembrane segments (helical) span residues 20 to 40 (IGTLLLLWPCLMALVLAAGGM), 43 to 63 (LKVLIIFIIGVVIMRACGCII), 96 to 116 (LFVILGLAAFGLVLLLNGLVV), 142 to 162 (FLGVVWSWSIPMAYAAQTGEV), 167 to 187 (WWLFAANWFWTVAYDTMYAMV), 210 to 230 (QIIGLFQIAALFCFVAAGWSA), 235 to 255 (VYGLGLLTFVGFSTYQQMLIF), and 266 to 286 (FLNNNWAGLVLFVSLGADYLF).

The protein belongs to the UbiA prenyltransferase family. Requires Mg(2+) as cofactor.

Its subcellular location is the cell inner membrane. The enzyme catalyses all-trans-octaprenyl diphosphate + 4-hydroxybenzoate = 4-hydroxy-3-(all-trans-octaprenyl)benzoate + diphosphate. It functions in the pathway cofactor biosynthesis; ubiquinone biosynthesis. Its function is as follows. Catalyzes the prenylation of para-hydroxybenzoate (PHB) with an all-trans polyprenyl group. Mediates the second step in the final reaction sequence of ubiquinone-8 (UQ-8) biosynthesis, which is the condensation of the polyisoprenoid side chain with PHB, generating the first membrane-bound Q intermediate 3-octaprenyl-4-hydroxybenzoate. The chain is 4-hydroxybenzoate octaprenyltransferase from Shewanella oneidensis (strain ATCC 700550 / JCM 31522 / CIP 106686 / LMG 19005 / NCIMB 14063 / MR-1).